We begin with the raw amino-acid sequence, 147 residues long: Small ribosomal subunit protein uS5 (147 aa).

One can recognise an S5 DRBM domain in the interval 9–72 (FEEVIVDIGR…DDAFKNIVEV (64 aa)).

This sequence belongs to the universal ribosomal protein uS5 family. In terms of assembly, part of the 30S ribosomal subunit. Contacts proteins S4 and S8.

With S4 and S12 plays an important role in translational accuracy. In terms of biological role, located at the back of the 30S subunit body where it stabilizes the conformation of the head with respect to the body. The chain is Small ribosomal subunit protein uS5 from Campylobacter fetus subsp. fetus (strain 82-40).